The primary structure comprises 468 residues: Glutamyl-tRNA reductase (468 aa).

Residues 49-52 (TCNR), Ser109, 114-116 (EQQ), and Gln120 each bind substrate. The active-site Nucleophile is the Cys50. Residue 189–194 (GAGAMG) participates in NADP(+) binding. A disordered region spans residues 443–468 (VPSGFDAESRRGGGDMQSSPKRSPSN). The segment covering 458–468 (MQSSPKRSPSN) has biased composition (polar residues).

It belongs to the glutamyl-tRNA reductase family. In terms of assembly, homodimer.

It carries out the reaction (S)-4-amino-5-oxopentanoate + tRNA(Glu) + NADP(+) = L-glutamyl-tRNA(Glu) + NADPH + H(+). Its pathway is porphyrin-containing compound metabolism; protoporphyrin-IX biosynthesis; 5-aminolevulinate from L-glutamyl-tRNA(Glu): step 1/2. Functionally, catalyzes the NADPH-dependent reduction of glutamyl-tRNA(Glu) to glutamate 1-semialdehyde (GSA). In Mycobacterium tuberculosis (strain ATCC 25177 / H37Ra), this protein is Glutamyl-tRNA reductase.